Consider the following 259-residue polypeptide: Proteasome subunit alpha (259 aa).

It belongs to the peptidase T1A family. As to quaternary structure, the 20S proteasome core is composed of 14 alpha and 14 beta subunits that assemble into four stacked heptameric rings, resulting in a barrel-shaped structure. The two inner rings, each composed of seven catalytic beta subunits, are sandwiched by two outer rings, each composed of seven alpha subunits. The catalytic chamber with the active sites is on the inside of the barrel. Has a gated structure, the ends of the cylinder being occluded by the N-termini of the alpha-subunits. Is capped at one or both ends by the proteasome regulatory ATPase, PAN.

The protein localises to the cytoplasm. With respect to regulation, the formation of the proteasomal ATPase PAN-20S proteasome complex, via the docking of the C-termini of PAN into the intersubunit pockets in the alpha-rings, triggers opening of the gate for substrate entry. Interconversion between the open-gate and close-gate conformations leads to a dynamic regulation of the 20S proteasome proteolysis activity. Its function is as follows. Component of the proteasome core, a large protease complex with broad specificity involved in protein degradation. The polypeptide is Proteasome subunit alpha (Methanococcus vannielii (strain ATCC 35089 / DSM 1224 / JCM 13029 / OCM 148 / SB)).